Consider the following 472-residue polypeptide: Coenzyme F(430) synthetase (472 aa).

119-125 provides a ligand contact to ATP; the sequence is GVKAKTS.

It belongs to the MurCDEF family.

The enzyme catalyses 15,17(3)-seco-F430-17(3)-acid + ATP = coenzyme F430 + ADP + phosphate. Functionally, involved in the biosynthesis of the unique nickel-containing tetrapyrrole coenzyme F430, the prosthetic group of methyl-coenzyme M reductase (MCR), which plays a key role in methanogenesis and anaerobic methane oxidation. Catalyzes the activation the g-propionate side chain of 15,17(3)-seco-F430-17(3)-acid (seco-F430) for intramolecular C-C bond formation to yield the carbocyclic F ring of coenzyme F430. The protein is Coenzyme F(430) synthetase of Methanosarcina acetivorans (strain ATCC 35395 / DSM 2834 / JCM 12185 / C2A).